We begin with the raw amino-acid sequence, 448 residues long: Protein Z-dependent protease inhibitor (448 aa).

A signal peptide spans 1–21 (MRVASSLFLPVLLTEVWLVTS). The segment at 33 to 70 (VHLESQDYENQTWEEYTRTDPREEEEEEEEKEEGKDEE) is disordered. The span at 54-63 (REEEEEEEEK) shows a compositional bias: acidic residues. The N-linked (GlcNAc...) asparagine glycan is linked to N81. The interval 140 to 157 (AGPLILPALFKKVKETFS) is heparin-binding. N-linked (GlcNAc...) asparagine glycans are attached at residues N184, N278, and N299.

Belongs to the serpin family. Post-translationally, phosphorylated by FAM20C in the extracellular medium. In terms of tissue distribution, detectable in liver, but not in heart, brain, spleen, lung, kidney, skeletal muscle or testes.

It localises to the secreted. Inhibits activity of the coagulation protease factor Xa in the presence of PROZ, calcium and phospholipids. Also inhibits factor XIa in the absence of cofactors. This Mus musculus (Mouse) protein is Protein Z-dependent protease inhibitor (Serpina10).